The following is a 256-amino-acid chain: Thrombin-like enzyme cerastocytin (256 aa).

The N-terminal stretch at 1 to 18 is a signal peptide; sequence MVLISVLASLLVLQLSYA. Residues 19-24 constitute a propeptide that is removed on maturation; the sequence is QKSSEL. In terms of domain architecture, Peptidase S1 spans 25-247; that stretch reads VIGGAECNIN…YTDWIRNIIA (223 aa). Disulfide bonds link C31/C161, C98/C254, C140/C208, C172/C187, and C198/C223. N-linked (GlcNAc...) asparagine glycosylation occurs at N44. Residues H65 and D108 each act as charge relay system in the active site. N-linked (GlcNAc...) asparagine glycans are attached at residues N119, N120, and N152. S202 serves as the catalytic Charge relay system.

This sequence belongs to the peptidase S1 family. Snake venom subfamily. As to quaternary structure, monomer. In terms of tissue distribution, expressed by the venom gland.

It localises to the secreted. Its activity is regulated as follows. Its platelets aggregating activity is inhibited by chlorpromazine, theophylline mepacrine. Its platelet aggregating activity and its amidolytic activity are inhibited by PMSF, TPCK, TLCK and soybean trypsin inhibitors. Is unaffected by hirudin or by antithrombin-III in the presence of heparin. In terms of biological role, thrombin-like snake venom serine protease which potently induces platelet aggregation and has fibrinogenolytic activities. Clots purified fibrinogen and hydrolyzes alpha-chains (FGA). High concentrations of this enzyme also cleave prothrombin (F2) and factor X (F10). Is also able to activate factor XIII (F8). The polypeptide is Thrombin-like enzyme cerastocytin (Cerastes cerastes (Horned desert viper)).